A 454-amino-acid polypeptide reads, in one-letter code: Aminodeoxychorismate synthase component 1 (454 aa).

L-tryptophan is bound by residues Ser37, 44–47 (YNRF), and 241–243 (PFS). The Proton donor role is filled by Glu259. Lys275 (N6-(4-deoxychorismate)-lysine intermediate) is an active-site residue.

It belongs to the anthranilate synthase component I family. As to quaternary structure, monomer. Heterodimer consisting of two non-identical subunits: a glutamine amidotransferase subunit (PabA) and a aminodeoxychorismate synthase subunit (PabB). The cofactor is Mg(2+).

It carries out the reaction chorismate + L-glutamine = 4-amino-4-deoxychorismate + L-glutamate. It functions in the pathway cofactor biosynthesis; tetrahydrofolate biosynthesis; 4-aminobenzoate from chorismate: step 1/2. Functionally, part of a heterodimeric complex that catalyzes the two-step biosynthesis of 4-amino-4-deoxychorismate (ADC), a precursor of p-aminobenzoate (PABA) and tetrahydrofolate. In the first step, a glutamine amidotransferase (PabA) generates ammonia as a substrate that, along with chorismate, is used in the second step, catalyzed by aminodeoxychorismate synthase (PabB) to produce ADC. This is Aminodeoxychorismate synthase component 1 (pabB) from Salmonella typhimurium (strain LT2 / SGSC1412 / ATCC 700720).